We begin with the raw amino-acid sequence, 210 residues long: 3-phospho-D-glycerate guanylyltransferase (210 aa).

It belongs to the CofC family.

It carries out the reaction (2R)-3-phosphoglycerate + GTP + H(+) = 3-[(R)-glyceryl]-diphospho-5'-guanosine + diphosphate. The protein operates within cofactor biosynthesis; coenzyme F420 biosynthesis. Guanylyltransferase that catalyzes the activation of (2R)-3-phosphoglycerate (3PG) as 3-[(R)-glyceryl]-diphospho-5'-guanosine, via the condensation of 3PG with GTP. It is involved in the biosynthesis of a derivative of the hydride carrier cofactor coenzyme F420, 3PG-F420. The chain is 3-phospho-D-glycerate guanylyltransferase from Colwellia psychrerythraea (strain 34H / ATCC BAA-681) (Vibrio psychroerythus).